The following is a 67-amino-acid chain: Alpha-toxin Bu1 (67 aa).

The LCN-type CS-alpha/beta domain occupies 3–65 (RDAYIADDKN…VPIRIPGRCR (63 aa)). Disulfide bonds link C13–C64, C17–C37, C23–C47, and C27–C49. Arginine amide is present on R65.

It belongs to the long (4 C-C) scorpion toxin superfamily. Sodium channel inhibitor family. Alpha subfamily. Expressed by the venom gland.

The protein localises to the secreted. Alpha toxins bind voltage-independently at site-3 of sodium channels (Nav) and inhibit the inactivation of the activated channels, thereby blocking neuronal transmission. Since the experiments have been done on F11 cells (immortalized cell line derived from rat DRG neurons mainly expressing Nav1.3/SCN3A, but also Nav1.7/SCN9A and Nav1.2/SCN2A), it is supposed to act on these channels. The slow of inactivation process is partially reversible. Is lethal to mice. This chain is Alpha-toxin Bu1, found in Buthacus macrocentrus (Turkish scorpion).